Reading from the N-terminus, the 61-residue chain is Large ribosomal subunit protein bL32 (61 aa).

Belongs to the bacterial ribosomal protein bL32 family.

This is Large ribosomal subunit protein bL32 from Hyphomonas neptunium (strain ATCC 15444).